Reading from the N-terminus, the 325-residue chain is Acetyl-coenzyme A carboxylase carboxyl transferase subunit alpha (325 aa).

In terms of domain architecture, CoA carboxyltransferase C-terminal spans 38 to 292 (KLEKRLHALE…DQVLEKSLKQ (255 aa)).

Belongs to the AccA family. In terms of assembly, acetyl-CoA carboxylase is a heterohexamer composed of biotin carboxyl carrier protein (AccB), biotin carboxylase (AccC) and two subunits each of ACCase subunit alpha (AccA) and ACCase subunit beta (AccD).

Its subcellular location is the cytoplasm. The catalysed reaction is N(6)-carboxybiotinyl-L-lysyl-[protein] + acetyl-CoA = N(6)-biotinyl-L-lysyl-[protein] + malonyl-CoA. It participates in lipid metabolism; malonyl-CoA biosynthesis; malonyl-CoA from acetyl-CoA: step 1/1. Functionally, component of the acetyl coenzyme A carboxylase (ACC) complex. First, biotin carboxylase catalyzes the carboxylation of biotin on its carrier protein (BCCP) and then the CO(2) group is transferred by the carboxyltransferase to acetyl-CoA to form malonyl-CoA. This is Acetyl-coenzyme A carboxylase carboxyl transferase subunit alpha from Halalkalibacterium halodurans (strain ATCC BAA-125 / DSM 18197 / FERM 7344 / JCM 9153 / C-125) (Bacillus halodurans).